A 312-amino-acid chain; its full sequence is Probable carboxylesterase 7 (312 aa).

Position 1 is an N-acetylmethionine (methionine 1). The Involved in the stabilization of the negatively charged intermediate by the formation of the oxyanion hole signature appears at 75–77 (HGG). Catalysis depends on residues serine 159, aspartate 255, and histidine 287.

This sequence belongs to the 'GDXG' lipolytic enzyme family. In terms of tissue distribution, expressed in leaves, stems, flowers and siliques.

It catalyses the reaction a carboxylic ester + H2O = an alcohol + a carboxylate + H(+). Its function is as follows. Carboxylesterase acting on esters with varying acyl chain length. The protein is Probable carboxylesterase 7 (CXE7) of Arabidopsis thaliana (Mouse-ear cress).